We begin with the raw amino-acid sequence, 191 residues long: Putative glutathione-dependent formaldehyde-activating enzyme (191 aa).

The region spanning 20–166 is the CENP-V/GFA domain; the sequence is FPGGNLYCKC…FHSLGLETYD (147 aa). 7 residues coordinate Zn(2+): Cys-27, Cys-29, Cys-48, Cys-50, Cys-53, Cys-95, and Cys-98.

The protein belongs to the Gfa family. The cofactor is Zn(2+).

It carries out the reaction S-(hydroxymethyl)glutathione = glutathione + formaldehyde. The protein operates within one-carbon metabolism; formaldehyde degradation; formate from formaldehyde (glutathione route): step 1/3. Its function is as follows. Catalyzes the condensation of formaldehyde and glutathione to S-hydroxymethylglutathione. The polypeptide is Putative glutathione-dependent formaldehyde-activating enzyme (Aspergillus niger (strain ATCC MYA-4892 / CBS 513.88 / FGSC A1513)).